The sequence spans 277 residues: Large ribosomal subunit protein uL2 (277 aa).

2 disordered regions span residues 24 to 55 and 221 to 277; these read ITTS…RHHG and RGSV…RKKK.

The protein belongs to the universal ribosomal protein uL2 family. In terms of assembly, part of the 50S ribosomal subunit. Forms a bridge to the 30S subunit in the 70S ribosome.

Its function is as follows. One of the primary rRNA binding proteins. Required for association of the 30S and 50S subunits to form the 70S ribosome, for tRNA binding and peptide bond formation. It has been suggested to have peptidyltransferase activity; this is somewhat controversial. Makes several contacts with the 16S rRNA in the 70S ribosome. The sequence is that of Large ribosomal subunit protein uL2 from Listeria welshimeri serovar 6b (strain ATCC 35897 / DSM 20650 / CCUG 15529 / CIP 8149 / NCTC 11857 / SLCC 5334 / V8).